Reading from the N-terminus, the 96-residue chain is Co-chaperonin GroES (96 aa).

The segment at 26–48 (LLPGSAQEKPSQGEVLATGNGQI) is disordered.

The protein belongs to the GroES chaperonin family. In terms of assembly, heptamer of 7 subunits arranged in a ring. Interacts with the chaperonin GroEL.

Its subcellular location is the cytoplasm. Its function is as follows. Together with the chaperonin GroEL, plays an essential role in assisting protein folding. The GroEL-GroES system forms a nano-cage that allows encapsulation of the non-native substrate proteins and provides a physical environment optimized to promote and accelerate protein folding. GroES binds to the apical surface of the GroEL ring, thereby capping the opening of the GroEL channel. This is Co-chaperonin GroES from Psychrobacter arcticus (strain DSM 17307 / VKM B-2377 / 273-4).